The chain runs to 546 residues: Probable sucrose-6-phosphate hydrolase (546 aa).

Residues 105 to 108, Q124, 167 to 168, 228 to 229, and E283 contribute to the substrate site; these read LLND, FS, and RD. The active site involves D108.

Belongs to the glycosyl hydrolase 32 family.

It is found in the cytoplasm. The enzyme catalyses Hydrolysis of terminal non-reducing beta-D-fructofuranoside residues in beta-D-fructofuranosides.. It participates in glycan biosynthesis; sucrose metabolism. Its function is as follows. Enables the bacterium to metabolize sucrose as a sole carbon source. In Vibrio cholerae, this protein is Probable sucrose-6-phosphate hydrolase.